The primary structure comprises 200 residues: Transgelin (200 aa).

A2 carries the N-acetylalanine modification. A Calponin-homology (CH) domain is found at 24 to 137 (DELEDRLVEW…RTLVALGSLA (114 aa)). Residues 175 to 199 (IGLQMGTNKGASQAGMSYGRPRQII) form a Calponin-like repeat.

The protein belongs to the calponin family. In terms of assembly, monomer. In terms of tissue distribution, gizzard, uterus, intestine, esophagus, aorta, and trace amounts in brain, liver and heart.

It is found in the cytoplasm. Its function is as follows. Actin cross-linking/gelling protein. This chain is Transgelin (TAGLN), found in Gallus gallus (Chicken).